The following is a 950-amino-acid chain: Protein translocase subunit SecA (950 aa).

ATP is bound by residues glutamine 87, 105 to 109, and aspartate 524; that span reads GEGKT. The segment at 908–932 is disordered; sequence GAAPVPAEARNPNDPSTWGKVGRNE. Cysteine 934, cysteine 936, cysteine 945, and histidine 946 together coordinate Zn(2+).

It belongs to the SecA family. As to quaternary structure, monomer and homodimer. Part of the essential Sec protein translocation apparatus which comprises SecA, SecYEG and auxiliary proteins SecDF-YajC and YidC. Requires Zn(2+) as cofactor.

It localises to the cell inner membrane. Its subcellular location is the cytoplasm. It carries out the reaction ATP + H2O + cellular proteinSide 1 = ADP + phosphate + cellular proteinSide 2.. Part of the Sec protein translocase complex. Interacts with the SecYEG preprotein conducting channel. Has a central role in coupling the hydrolysis of ATP to the transfer of proteins into and across the cell membrane, serving both as a receptor for the preprotein-SecB complex and as an ATP-driven molecular motor driving the stepwise translocation of polypeptide chains across the membrane. This Bradyrhizobium sp. (strain BTAi1 / ATCC BAA-1182) protein is Protein translocase subunit SecA.